A 121-amino-acid chain; its full sequence is Glycine cleavage system H protein (121 aa).

One can recognise a Lipoyl-binding domain in the interval 22–102 (IAWVGITKYA…DSSVWLFKAE (81 aa)). Lys63 carries the post-translational modification N6-lipoyllysine.

Belongs to the GcvH family. The glycine cleavage system is composed of four proteins: P, T, L and H. It depends on (R)-lipoate as a cofactor.

The glycine cleavage system catalyzes the degradation of glycine. The H protein shuttles the methylamine group of glycine from the P protein to the T protein. The polypeptide is Glycine cleavage system H protein (Tropheryma whipplei (strain TW08/27) (Whipple's bacillus)).